The following is a 238-amino-acid chain: Thiamine import ATP-binding protein ThiQ (238 aa).

The 234-residue stretch at 1–234 (MSSTALAVKG…RDIAAINRFL (234 aa)) folds into the ABC transporter domain. Residue 36-43 (GASGSGKS) participates in ATP binding.

It belongs to the ABC transporter superfamily. Thiamine importer (TC 3.A.1.19.1) family. The complex is composed of two ATP-binding proteins (ThiQ), two transmembrane proteins (ThiP) and a solute-binding protein (ThiB).

Its subcellular location is the cell inner membrane. It catalyses the reaction thiamine(out) + ATP + H2O = thiamine(in) + ADP + phosphate + H(+). Functionally, part of the ABC transporter complex ThiBPQ involved in thiamine import. Responsible for energy coupling to the transport system. This chain is Thiamine import ATP-binding protein ThiQ, found in Rhizobium meliloti (strain 1021) (Ensifer meliloti).